The chain runs to 382 residues: MSRRNWINLFSTSQSVELSGDLERGYDAALLIQSLELEYYGDRQIRPELKLSVPRSVQATILRRFKTALSICRSSAAKLSDQRGQLDSQELRQLQLIESIVSRYGSRRSTSSPSISRSPDALPRSLLGVFDSIRLQLDPSTEDSVVAGFRRRRDTTLISLRVLLLLVLVPLLVSQISGTYLISPAVNQFSPELPFLSYPKPLLEEKAAKKLRLYKQELEFDAFLKGVEPLDDAELRNKLTEKATELKHDADEESLKAIKNVFADLAGLIAFAVVCLMSRDELRVLRGFVDEAVYGLSDSAKAFAIILFTDIFVGYHSPEGWSVLLDGVADHFGLPSSQSFVNLFIATFPVVLATIFKYWIFRYLNRVSPSSVATLKGMNGGG.

4 helical membrane-spanning segments follow: residues 162-182 (VLLLLVLVPLLVSQISGTYLI), 257-277 (AIKNVFADLAGLIAFAVVCLM), 305-325 (IILFTDIFVGYHSPEGWSVLL), and 340-360 (FVNLFIATFPVVLATIFKYWI).

It belongs to the CemA family.

Its subcellular location is the cell inner membrane. In terms of biological role, required for H(+) efflux immediately after light irradiation to form a rapid H(+) concentration gradient across the thylakoid membranes. Together with PxcL, contributes to transient H(+) uptake following dark to light transition. The chain is Proton extrusion protein PxcA from Synechococcus sp. (strain CC9605).